The chain runs to 810 residues: RING finger protein unkempt homolog (810 aa).

Residues 1–24 (MSKGPGPGGSAASSAPPAATAQVL) are disordered. Positions 10-19 (SAASSAPPAA) are enriched in low complexity. C3H1-type zinc fingers lie at residues 84–113 (YSPDVYCTKYDEATGLCPEGDECPFLHRTT), 124–154 (YYKTGICIHETDSKGNCTKNGLHCAFAHGPH), 215–241 (NYKTEPCKKPPRLCRQGYACPYYHNSK), 251–285 (KYRSSPCPNVKHGDEWGDPGKCENGDACQYCHTRT), and 293–321 (IYKSTKCNDMQQAGSCPRGPFCAFAHIEP). The tract at residues 239–265 (NSKDRRRSPRKHKYRSSPCPNVKHGDE) is disordered. Ser-240 is modified (phosphoserine). Residues 241–253 (KDRRRSPRKHKYR) are compositionally biased toward basic residues. Phosphoserine occurs at positions 374, 378, 385, and 394. Residues 478-497 (TSSLAATPPSPAGTNSTPGM) are disordered. Ser-631 carries the post-translational modification Phosphoserine. Residues 643 to 727 (GAAELARLRQ…ERLHTVPEAQ (85 aa)) are a coiled coil. The RING-type; degenerate zinc finger occupies 766-801 (SVKCLKCQEQTRAVLPCQHAVLCELCAEGSECPVCQ).

Belongs to the unkempt family.

The protein resides in the cytoplasm. In terms of biological role, sequence-specific RNA-binding protein which plays an important role in the establishment and maintenance of the early morphology of cortical neurons during embryonic development. Acts as a translation repressor and controls a translationally regulated cell morphology program to ensure proper structuring of the nervous system. Translational control depends on recognition of its binding element within target mRNAs which consists of a mandatory UAG trimer upstream of a U/A-rich motif. Associated with polysomes. In Mus musculus (Mouse), this protein is RING finger protein unkempt homolog (Unk).